The chain runs to 160 residues: Cytochrome b6-f complex subunit 4 (160 aa).

Helical transmembrane passes span 36–56 (LLYM…GLSV), 95–115 (LLGV…PFIE), and 131–151 (ILFL…TFPI).

This sequence belongs to the cytochrome b family. PetD subfamily. In terms of assembly, the 4 large subunits of the cytochrome b6-f complex are cytochrome b6, subunit IV (17 kDa polypeptide, petD), cytochrome f and the Rieske protein, while the 4 small subunits are petG, petL, petM and petN. The complex functions as a dimer. Post-translationally, the N-terminus is blocked.

The protein localises to the plastid. Its subcellular location is the chloroplast thylakoid membrane. Functionally, component of the cytochrome b6-f complex, which mediates electron transfer between photosystem II (PSII) and photosystem I (PSI), cyclic electron flow around PSI, and state transitions. This is Cytochrome b6-f complex subunit 4 from Chlamydomonas reinhardtii (Chlamydomonas smithii).